The primary structure comprises 212 residues: Peptide methionine sulfoxide reductase MsrA (212 aa).

Residues 1–14 (MNSIDKTQRITQSD) show a composition bias toward polar residues. The disordered stretch occupies residues 1–21 (MNSIDKTQRITQSDALPGRST). C52 is a catalytic residue.

This sequence belongs to the MsrA Met sulfoxide reductase family.

It carries out the reaction L-methionyl-[protein] + [thioredoxin]-disulfide + H2O = L-methionyl-(S)-S-oxide-[protein] + [thioredoxin]-dithiol. It catalyses the reaction [thioredoxin]-disulfide + L-methionine + H2O = L-methionine (S)-S-oxide + [thioredoxin]-dithiol. Its function is as follows. Has an important function as a repair enzyme for proteins that have been inactivated by oxidation. Catalyzes the reversible oxidation-reduction of methionine sulfoxide in proteins to methionine. This chain is Peptide methionine sulfoxide reductase MsrA, found in Pectobacterium atrosepticum (strain SCRI 1043 / ATCC BAA-672) (Erwinia carotovora subsp. atroseptica).